Reading from the N-terminus, the 239-residue chain is 2-C-methyl-D-erythritol 4-phosphate cytidylyltransferase (239 aa).

Belongs to the IspD/TarI cytidylyltransferase family. IspD subfamily.

It catalyses the reaction 2-C-methyl-D-erythritol 4-phosphate + CTP + H(+) = 4-CDP-2-C-methyl-D-erythritol + diphosphate. Its pathway is isoprenoid biosynthesis; isopentenyl diphosphate biosynthesis via DXP pathway; isopentenyl diphosphate from 1-deoxy-D-xylulose 5-phosphate: step 2/6. In terms of biological role, catalyzes the formation of 4-diphosphocytidyl-2-C-methyl-D-erythritol from CTP and 2-C-methyl-D-erythritol 4-phosphate (MEP). The chain is 2-C-methyl-D-erythritol 4-phosphate cytidylyltransferase from Ruthia magnifica subsp. Calyptogena magnifica.